An 89-amino-acid chain; its full sequence is Venom peptide BmKAPI (89 aa).

An N-terminal signal peptide occupies residues 1 to 22 (MKFVFASFALFVIFLCFSQSLS). Cystine bridges form between C28–C66, C37–C62, C41–C55, C46–C86, and C68–C80. The TIL domain occupies 28–86 (CRDNEVFDNCISNCGPPRCSNILNTYPCTNLGPLCTPGCKCKDGRVYDNQGRCVLQTEC).

This sequence belongs to the serine protease inhibitor-like (TIL domain-containing) family. As to expression, expressed by the venom gland.

Its subcellular location is the secreted. In terms of biological role, serine protease inhibitor. The sequence is that of Venom peptide BmKAPI from Olivierus martensii (Manchurian scorpion).